A 249-amino-acid polypeptide reads, in one-letter code: Basigin (249 aa).

Residues 1-82 (AAGTIQTSVN…VGRSNIVVEG (82 aa)) form the Ig-like C2-type domain. The Extracellular portion of the chain corresponds to 1 to 187 (AAGTIQTSVN…MTLRVRSRLA (187 aa)). 2 disulfides stabilise this stretch: Cys-20/Cys-66 and Cys-105/Cys-165. 3 N-linked (GlcNAc...) asparagine glycosylation sites follow: Asn-23, Asn-132, and Asn-166. The Ig-like V-type domain maps to 84 to 179 (PRIKVGKKSE…TQGSVQEIMT (96 aa)). The helical transmembrane segment at 188–208 (ALWPFLGIVAEVLVLVTIIFI) threads the bilayer. The Cytoplasmic portion of the chain corresponds to 209–249 (YEKRRKPDQTLDEDDPGAAPLKGSGHHMNDKDKNVRQRNAT). Positions 216-249 (DQTLDEDDPGAAPLKGSGHHMNDKDKNVRQRNAT) are disordered. Residue Thr-218 is modified to Phosphothreonine. Residue Ser-232 is modified to Phosphoserine.

Homooligomer. Interacts with VEGFA, KDR/VEGFR2, PPIA/CYPA, SLC16A12, SLC16A11, ATP1B2, MAG, L1CAM and AJAP1. Interacts with SLC16A3; interaction mediates SLC16A3 targeting to the plasma membrane. Interacts with SLC16A1; interaction mediates SLC16A1 targeting to the plasma membrane. Interacts with PPIL2; regulates BSG transport to the cell membrane. Interacts with XKR8; promoting its localization at the cell membrane. Interacts with SLC16A6; this interaction mediates targeting to the plasma membrane.

It localises to the cell membrane. It is found in the endoplasmic reticulum membrane. The protein localises to the basolateral cell membrane. Signaling receptor for cyclophilins, essential for PPIA/CYPA and PPIB/CYPB-dependent signaling related to chemotaxis and adhesion of immune cells. Plays an important role in targeting the monocarboxylate transporters SLC16A1/GLUT1, SLC16A3, SLC16A8, SLC16A11 and SLC16A12 to the plasma membrane. Acts as a coreceptor for vascular endothelial growth factor receptor 2 (KDR/VEGFR2) in endothelial cells enhancing its VEGFA-mediated activation and downstream signaling. Promotes angiogenesis through EPAS1/HIF2A-mediated up-regulation of VEGFA and KDR/VEGFR2 in endothelial cells. The polypeptide is Basigin (BSG) (Cricetulus griseus (Chinese hamster)).